Reading from the N-terminus, the 197-residue chain is Putative eggshell protein (197 aa).

The signal sequence occupies residues 1–17 (MKFHLVLLLAIVPLTLA).

In Fasciola hepatica (Liver fluke), this protein is Putative eggshell protein.